The sequence spans 474 residues: ATP synthase subunit beta (474 aa).

Residue 153–160 (GGAGVGKT) coordinates ATP.

It belongs to the ATPase alpha/beta chains family. As to quaternary structure, F-type ATPases have 2 components, CF(1) - the catalytic core - and CF(0) - the membrane proton channel. CF(1) has five subunits: alpha(3), beta(3), gamma(1), delta(1), epsilon(1). CF(0) has three main subunits: a(1), b(2) and c(9-12). The alpha and beta chains form an alternating ring which encloses part of the gamma chain. CF(1) is attached to CF(0) by a central stalk formed by the gamma and epsilon chains, while a peripheral stalk is formed by the delta and b chains.

It localises to the cell inner membrane. It carries out the reaction ATP + H2O + 4 H(+)(in) = ADP + phosphate + 5 H(+)(out). Produces ATP from ADP in the presence of a proton gradient across the membrane. The catalytic sites are hosted primarily by the beta subunits. This is ATP synthase subunit beta from Rickettsia typhi (strain ATCC VR-144 / Wilmington).